The primary structure comprises 416 residues: Histone acetyltransferase type B catalytic subunit (416 aa).

An N-acetylalanine modification is found at Ala2. N6-acetyllysine is present on residues Lys6 and Lys12. The tract at residues 59 to 61 (DDE) is interaction with histone H4 N-terminus. Ser187 carries the phosphoserine modification. Residues 222–224 (YNY) form an interaction with histone H4 N-terminus region. Acetyl-CoA contacts are provided by residues 238–240 (MLI) and 245–251 (QGQGHGA). The active-site Proton donor/acceptor is Glu273. Ser340 is modified (phosphoserine).

Belongs to the HAT1 family. Catalytic subunit of the type B histone acetyltransferase (HAT) complex, composed of RBBP7 and HAT1. Interacts with histones H4 and H2A. The interaction is dependent of the ability of RBBP7 to bind to the N-terminus of histones. Component of the histone H3.1 and H3.3 complexes. Post-translationally, phosphorylated by AMPK at Ser-187; phosphorylation increases HAT1 activity.

The protein localises to the nucleus matrix. It is found in the mitochondrion. The catalysed reaction is L-lysyl-[protein] + acetyl-CoA = N(6)-acetyl-L-lysyl-[protein] + CoA + H(+). Its function is as follows. Histone acetyltransferase that plays a role in different biological processes including cell cycle progression, glucose metabolism, histone production or DNA damage repair. Coordinates histone production and acetylation via H4 promoter binding. Acetylates histone H4 at 'Lys-5' (H4K5ac) and 'Lys-12' (H4K12ac) and, to a lesser extent, histone H2A at 'Lys-5' (H2AK5ac). Drives H4 production by chromatin binding to support chromatin replication and acetylation. Since transcription of H4 genes is tightly coupled to S-phase, plays an important role in S-phase entry and progression. Promotes homologous recombination in DNA repair by facilitating histone turnover and incorporation of acetylated H3.3 at sites of double-strand breaks. In addition, acetylates other substrates such as chromatin-related proteins. Also acetylates RSAD2 which mediates the interaction of ubiquitin ligase UBE4A with RSAD2 leading to RSAD2 ubiquitination and subsequent degradation. This chain is Histone acetyltransferase type B catalytic subunit (Hat1), found in Mus musculus (Mouse).